A 358-amino-acid chain; its full sequence is WD repeat-containing protein 53 (358 aa).

WD repeat units follow at residues 8–47 (GHSS…GHMQ), 92–131 (VNEE…VTRS), 134–174 (RHSN…PVWI), 195–234 (LNPA…CERE), and 239–278 (GHTL…EKLQ). Positions 288–309 (KKAKRAACPTQGGNSRAPGAED) are disordered.

The protein belongs to the WD repeat WDR53 family.

This chain is WD repeat-containing protein 53 (Wdr53), found in Mus musculus (Mouse).